A 451-amino-acid polypeptide reads, in one-letter code: Tubby-like F-box protein 12 (451 aa).

Residues Ser-57–Gly-112 form the F-box domain. Residues Leu-387–Ser-406 show a composition bias toward low complexity. Positions Leu-387–Asp-407 are disordered.

The protein belongs to the TUB family. As to expression, ubiquitous.

The sequence is that of Tubby-like F-box protein 12 (TULP12) from Oryza sativa subsp. japonica (Rice).